The chain runs to 574 residues: Polyamine aminopropyltransferase (574 aa).

7 helical membrane passes run 22–42, 55–75, 90–110, 144–164, 188–208, 209–229, and 237–257; these read VLLL…EYLL, AAIY…AFAA, LTVA…IGFG, LPYF…PLIA, IGAG…DIQL, AAAL…WRFW, and LLLA…IQGP. Residues 254–510 are spermidine synthase; that stretch reads IQGPSWEQQF…ATLDGKDAQH (257 aa). The PABS domain occupies 257–505; sequence PSWEQQFNNL…WGWSIATLDG (249 aa). Gln281 provides a ligand contact to S-methyl-5'-thioadenosine. Residues His317 and Asp341 each coordinate spermidine. S-methyl-5'-thioadenosine is bound by residues Asp360 and 403-404; that span reads DA. Asp424 serves as the catalytic Proton acceptor.

This sequence belongs to the spermidine/spermine synthase family. Homodimer or homotetramer.

It is found in the cell membrane. The enzyme catalyses S-adenosyl 3-(methylsulfanyl)propylamine + putrescine = S-methyl-5'-thioadenosine + spermidine + H(+). The protein operates within amine and polyamine biosynthesis; spermidine biosynthesis; spermidine from putrescine: step 1/1. In terms of biological role, catalyzes the irreversible transfer of a propylamine group from the amino donor S-adenosylmethioninamine (decarboxy-AdoMet) to putrescine (1,4-diaminobutane) to yield spermidine. The polypeptide is Polyamine aminopropyltransferase (Shewanella oneidensis (strain ATCC 700550 / JCM 31522 / CIP 106686 / LMG 19005 / NCIMB 14063 / MR-1)).